The chain runs to 468 residues: Methionine aminopeptidase 2 (468 aa).

The span at 1-10 (MGSKTFEGEG) shows a compositional bias: basic and acidic residues. Residues 1-106 (MGSKTFEGEG…PPRVPLDDLF (106 aa)) are disordered. The segment covering 16–25 (DPSNSTSPNS) has biased composition (polar residues). Positions 31–40 (RGAHLSRDGD) are enriched in basic and acidic residues. Over residues 46-56 (GDGDDGADGDE) the composition is skewed to acidic residues. Residues 61 to 75 (VTTTPLTEQQPSSET) are compositionally biased toward polar residues. Basic residues predominate over residues 78 to 90 (KKKKRRKPKKKIS). Residue His-219 coordinates substrate. Residues Asp-240, Asp-251, and His-320 each contribute to the a divalent metal cation site. His-328 lines the substrate pocket. A divalent metal cation contacts are provided by Glu-353 and Glu-449.

The protein belongs to the peptidase M24A family. Methionine aminopeptidase eukaryotic type 2 subfamily. It depends on Co(2+) as a cofactor. Requires Zn(2+) as cofactor. The cofactor is Mn(2+). Fe(2+) is required as a cofactor.

It is found in the cytoplasm. The catalysed reaction is Release of N-terminal amino acids, preferentially methionine, from peptides and arylamides.. In terms of biological role, cotranslationally removes the N-terminal methionine from nascent proteins. The N-terminal methionine is often cleaved when the second residue in the primary sequence is small and uncharged (Met-Ala-, Cys, Gly, Pro, Ser, Thr, or Val). This chain is Methionine aminopeptidase 2, found in Aspergillus oryzae (strain ATCC 42149 / RIB 40) (Yellow koji mold).